The sequence spans 138 residues: Methane monooxygenase regulatory protein B (138 aa).

Belongs to the TmoD/XamoD family. The soluble methane monooxygenase (sMMO) consists of four components A/MMOH (composed of alpha/MmoX, beta/MmoY and gamma/MmoZ), B/MMOB (MmoB), C/MMOR (MmoC) and D/MMOD (MmoD).

Its function is as follows. The B protein acts as a regulator of electron flow through the soluble mmo complex, switching the enzyme from an oxidase to a hydroxylase in the presence of the substrate. This is Methane monooxygenase regulatory protein B (mmoB) from Methylosinus trichosporium.